We begin with the raw amino-acid sequence, 487 residues long: Glutamyl-tRNA(Gln) amidotransferase subunit A (487 aa).

Active-site charge relay system residues include Lys-77 and Ser-152. Ser-176 functions as the Acyl-ester intermediate in the catalytic mechanism.

The protein belongs to the amidase family. GatA subfamily. In terms of assembly, heterotrimer of A, B and C subunits.

The catalysed reaction is L-glutamyl-tRNA(Gln) + L-glutamine + ATP + H2O = L-glutaminyl-tRNA(Gln) + L-glutamate + ADP + phosphate + H(+). Allows the formation of correctly charged Gln-tRNA(Gln) through the transamidation of misacylated Glu-tRNA(Gln) in organisms which lack glutaminyl-tRNA synthetase. The reaction takes place in the presence of glutamine and ATP through an activated gamma-phospho-Glu-tRNA(Gln). The chain is Glutamyl-tRNA(Gln) amidotransferase subunit A from Ligilactobacillus salivarius (strain UCC118) (Lactobacillus salivarius).